A 184-amino-acid chain; its full sequence is Ribosome-recycling factor (184 aa).

Belongs to the RRF family.

Its subcellular location is the cytoplasm. Responsible for the release of ribosomes from messenger RNA at the termination of protein biosynthesis. May increase the efficiency of translation by recycling ribosomes from one round of translation to another. In Borrelia garinii subsp. bavariensis (strain ATCC BAA-2496 / DSM 23469 / PBi) (Borreliella bavariensis), this protein is Ribosome-recycling factor.